The following is a 285-amino-acid chain: Nucleotide-binding protein Glov_2163 (285 aa).

ATP is bound at residue 8-15 (GMSGSGKS). GTP is bound at residue 59–62 (DIRG).

Belongs to the RapZ-like family.

Functionally, displays ATPase and GTPase activities. In Trichlorobacter lovleyi (strain ATCC BAA-1151 / DSM 17278 / SZ) (Geobacter lovleyi), this protein is Nucleotide-binding protein Glov_2163.